A 64-amino-acid polypeptide reads, in one-letter code: Large ribosomal subunit protein uL29 (64 aa).

Belongs to the universal ribosomal protein uL29 family.

The protein is Large ribosomal subunit protein uL29 of Nitrosomonas europaea (strain ATCC 19718 / CIP 103999 / KCTC 2705 / NBRC 14298).